The following is a 563-amino-acid chain: Pyruvate decarboxylase (563 aa).

Pyruvate-binding residues include Asp-28 and His-115. Thiamine diphosphate contacts are provided by residues Thr-390 and 413-415; that span reads GSI. Asp-444 serves as a coordination point for Mg(2+). Thiamine diphosphate is bound by residues 445 to 446 and 471 to 476; these read GS and NDGYTI. Asn-471 and Gly-473 together coordinate Mg(2+). Residue Glu-477 coordinates pyruvate.

It belongs to the TPP enzyme family. Homotetramer. Mg(2+) serves as cofactor. The cofactor is thiamine diphosphate.

The enzyme catalyses a 2-oxocarboxylate + H(+) = an aldehyde + CO2. It carries out the reaction pyruvate + H(+) = acetaldehyde + CO2. This Kluyveromyces lactis (strain ATCC 8585 / CBS 2359 / DSM 70799 / NBRC 1267 / NRRL Y-1140 / WM37) (Yeast) protein is Pyruvate decarboxylase (PDC1).